We begin with the raw amino-acid sequence, 248 residues long: Anamorsin homolog (248 aa).

Residues 4 to 129 are N-terminal SAM-like domain; it reads FKGLQKTLYI…ETGSSARLSF (126 aa). The interval 130–161 is linker; it reads AKKDASALNVWKISGDDEELIDEEDLLDEEDK. [2Fe-2S] cluster contacts are provided by Cys-172, Cys-181, Cys-184, and Cys-186. The fe-S binding site A stretch occupies residues 172–186; sequence CSTTGKRKACKNCSC. Residues Cys-209, Cys-212, Cys-220, and Cys-223 each coordinate [4Fe-4S] cluster. Short sequence motifs (cx2C motif) lie at residues 209-212 and 220-223; these read CGNC and CSTC. A fe-S binding site B region spans residues 209–223; sequence CGNCYLGDAFRCSTC.

It belongs to the anamorsin family. In terms of assembly, monomer. The cofactor is [2Fe-2S] cluster. It depends on [4Fe-4S] cluster as a cofactor.

The protein resides in the cytoplasm. It localises to the mitochondrion intermembrane space. Its function is as follows. Component of the cytosolic iron-sulfur (Fe-S) protein assembly (CIA) machinery. Required for the maturation of extramitochondrial Fe-S proteins. Part of an electron transfer chain functioning in an early step of cytosolic Fe-S biogenesis, facilitating the de novo assembly of a [4Fe-4S] cluster on the cytosolic Fe-S scaffold complex. Electrons are transferred from NADPH via a FAD- and FMN-containing diflavin oxidoreductase. Together with the diflavin oxidoreductase, also required for the assembly of the diferric tyrosyl radical cofactor of ribonucleotide reductase (RNR), probably by providing electrons for reduction during radical cofactor maturation in the catalytic small subunit. In Drosophila ananassae (Fruit fly), this protein is Anamorsin homolog.